We begin with the raw amino-acid sequence, 978 residues long: Regulator of telomere elongation helicase 1 homolog (978 aa).

The Helicase ATP-binding domain occupies 7–318 (NGIPVNFPFE…EDDDAKKDFT (312 aa)). Position 42-49 (42-49 (SPTGTGKT)) interacts with ATP. 4 residues coordinate [4Fe-4S] cluster: Cys-159, Cys-177, Cys-186, and Cys-222. Positions 265 to 268 (DEAH) match the DEAH box motif.

This sequence belongs to the helicase family. RAD3/XPD subfamily.

It is found in the nucleus. The enzyme catalyses ATP + H2O = ADP + phosphate + H(+). Its function is as follows. A probable ATP-dependent DNA helicase implicated in DNA repair and the maintenance of genomic stability. Acts as an anti-recombinase to counteract toxic recombination and limit crossover during meiosis. Regulates meiotic recombination and crossover homeostasis by physically dissociating strand invasion events and thereby promotes noncrossover repair by meiotic synthesis dependent strand annealing (SDSA) as well as disassembly of D loop recombination intermediates. The polypeptide is Regulator of telomere elongation helicase 1 homolog (Culex quinquefasciatus (Southern house mosquito)).